A 283-amino-acid polypeptide reads, in one-letter code: ATP phosphoribosyltransferase (283 aa).

The protein belongs to the ATP phosphoribosyltransferase family. Long subfamily. Mg(2+) serves as cofactor.

Its subcellular location is the cytoplasm. It catalyses the reaction 1-(5-phospho-beta-D-ribosyl)-ATP + diphosphate = 5-phospho-alpha-D-ribose 1-diphosphate + ATP. It participates in amino-acid biosynthesis; L-histidine biosynthesis; L-histidine from 5-phospho-alpha-D-ribose 1-diphosphate: step 1/9. With respect to regulation, feedback inhibited by histidine. Its function is as follows. Catalyzes the condensation of ATP and 5-phosphoribose 1-diphosphate to form N'-(5'-phosphoribosyl)-ATP (PR-ATP). Has a crucial role in the pathway because the rate of histidine biosynthesis seems to be controlled primarily by regulation of HisG enzymatic activity. This is ATP phosphoribosyltransferase from Rhodococcus jostii (strain RHA1).